The primary structure comprises 141 residues: Large ribosomal subunit protein uL11 (141 aa).

Belongs to the universal ribosomal protein uL11 family. In terms of assembly, part of the ribosomal stalk of the 50S ribosomal subunit. Interacts with L10 and the large rRNA to form the base of the stalk. L10 forms an elongated spine to which L12 dimers bind in a sequential fashion forming a multimeric L10(L12)X complex. In terms of processing, one or more lysine residues are methylated.

Its function is as follows. Forms part of the ribosomal stalk which helps the ribosome interact with GTP-bound translation factors. The polypeptide is Large ribosomal subunit protein uL11 (Amoebophilus asiaticus (strain 5a2)).